Here is a 414-residue protein sequence, read N- to C-terminus: Gamma-glutamyl phosphate reductase (414 aa).

Belongs to the gamma-glutamyl phosphate reductase family.

The protein resides in the cytoplasm. The enzyme catalyses L-glutamate 5-semialdehyde + phosphate + NADP(+) = L-glutamyl 5-phosphate + NADPH + H(+). The protein operates within amino-acid biosynthesis; L-proline biosynthesis; L-glutamate 5-semialdehyde from L-glutamate: step 2/2. Functionally, catalyzes the NADPH-dependent reduction of L-glutamate 5-phosphate into L-glutamate 5-semialdehyde and phosphate. The product spontaneously undergoes cyclization to form 1-pyrroline-5-carboxylate. The sequence is that of Gamma-glutamyl phosphate reductase from Geobacillus thermodenitrificans (strain NG80-2).